The sequence spans 1380 residues: DNA-directed RNA polymerase subunit beta (1380 aa).

It belongs to the RNA polymerase beta chain family. In terms of assembly, the RNAP catalytic core consists of 2 alpha, 1 beta, 1 beta' and 1 omega subunit. When a sigma factor is associated with the core the holoenzyme is formed, which can initiate transcription.

The enzyme catalyses RNA(n) + a ribonucleoside 5'-triphosphate = RNA(n+1) + diphosphate. Functionally, DNA-dependent RNA polymerase catalyzes the transcription of DNA into RNA using the four ribonucleoside triphosphates as substrates. The polypeptide is DNA-directed RNA polymerase subunit beta (Nitrobacter winogradskyi (strain ATCC 25391 / DSM 10237 / CIP 104748 / NCIMB 11846 / Nb-255)).